Consider the following 187-residue polypeptide: Large ribosomal subunit protein uL5 (187 aa).

This sequence belongs to the universal ribosomal protein uL5 family. As to quaternary structure, part of the 50S ribosomal subunit; part of the 5S rRNA/L5/L18/L25 subcomplex. Contacts the 5S rRNA and the P site tRNA. Forms a bridge to the 30S subunit in the 70S ribosome.

Its function is as follows. This is one of the proteins that bind and probably mediate the attachment of the 5S RNA into the large ribosomal subunit, where it forms part of the central protuberance. In the 70S ribosome it contacts protein S13 of the 30S subunit (bridge B1b), connecting the 2 subunits; this bridge is implicated in subunit movement. Contacts the P site tRNA; the 5S rRNA and some of its associated proteins might help stabilize positioning of ribosome-bound tRNAs. The sequence is that of Large ribosomal subunit protein uL5 from Saccharopolyspora erythraea (strain ATCC 11635 / DSM 40517 / JCM 4748 / NBRC 13426 / NCIMB 8594 / NRRL 2338).